A 217-amino-acid polypeptide reads, in one-letter code: Adenylate kinase (217 aa).

An ATP-binding site is contributed by Gly10–Thr15. The tract at residues Ser30–Val59 is NMP. Residues Thr31, Arg36, Glu57–Val59, Gly85–Arg88, and Gln92 contribute to the AMP site. The tract at residues Gly126 to Asp163 is LID. Arg127 contributes to the ATP binding site. Residues Cys130 and Cys133 each contribute to the Zn(2+) site. Thr136–Tyr137 contributes to the ATP binding site. 2 residues coordinate Zn(2+): Cys150 and Asp153. The AMP site is built by Arg160 and Arg171. Gln199 serves as a coordination point for ATP.

The protein belongs to the adenylate kinase family. As to quaternary structure, monomer.

The protein localises to the cytoplasm. The catalysed reaction is AMP + ATP = 2 ADP. It functions in the pathway purine metabolism; AMP biosynthesis via salvage pathway; AMP from ADP: step 1/1. Its function is as follows. Catalyzes the reversible transfer of the terminal phosphate group between ATP and AMP. Plays an important role in cellular energy homeostasis and in adenine nucleotide metabolism. The sequence is that of Adenylate kinase from Bacillus subtilis (strain 168).